A 704-amino-acid polypeptide reads, in one-letter code: MDHITVPKVENVKLVDRYVSKKPANGILYLTATHLIYVEASGAARKETWIALHHIATVEKLPITSLGCPLTLRCKNFRVAHFVLDSDLVCHEVYISLLKLSQPALPEDLYAFSYNPKSSKEMRESGWKLIDPISDFGRMGIPNRNWTITDANRNYEICSTYPPEIVVPKSVTLGTVVGSSKFRSKERVPVLSYLYKENNAAICRCSQPLSGFYTRCVDDELLLEAISQTNPGSQFMYVVDTRPKLNAMANRAAGKGYENEDNYANIRFRFMGIENIHVMRSSLQKLLEVCELKTPTMSEFLSGLESSGWLRHIKAIMDAGIFITKAVKVEKASVLVHCSDGWDRTAQVCSVASILLDPFYRTFKGLMILIEKEWISMGHKFSQRCGHLDGDSKEVSPIFTQFLDCIWQLMEQFPCAFEFNENFLLEIHDHVFSCQFGNFLGNCQKDREDLRVYEKTHSVWPFLVQRKPDFRNPLYKGFTMYGVLNPSTVPYNIQFWCGMYNRFDKGLQPKQSMLESLLEIKKQRAMLETDVHELEKKLKVRDEPPEEICTCSQLGNILSQHLGSPLTNPLGFMGINGDLNTLMENGTLSREGGLRAQMDQVKSQGADLHHNCCEIVGSLRAINISGDVGISEAMGISGDMCTFEATGFSKDLGICGAMDISEATGISGNLGISEARGFSGDMGILGDTGISKASTKEADYSKHQ.

The Myotubularin phosphatase domain occupies 126-500 (GWKLIDPISD…YNIQFWCGMY (375 aa)). A 1,2-diacyl-sn-glycero-3-phospho-(1D-myo-inositol-3,5-bisphosphate) contacts are provided by Asn250, Asn275, and Ile276. The a 1,2-diacyl-sn-glycero-3-phospho-(1D-myo-inositol-3-phosphate) site is built by Asn250, Asn275, and Ile276. The active-site Phosphocysteine intermediate is Cys338. A 1,2-diacyl-sn-glycero-3-phospho-(1D-myo-inositol-3,5-bisphosphate)-binding residues include Ser339, Asp340, Gly341, Trp342, Asp343, Arg344, Lys380, and Arg384. Residues Ser339, Asp340, Gly341, Trp342, Asp343, and Arg344 each contribute to the a 1,2-diacyl-sn-glycero-3-phospho-(1D-myo-inositol-3-phosphate) site. Phosphate contacts are provided by Ser339 and Asp340. Positions 342, 343, and 344 each coordinate phosphate. Position 384 (Arg384) interacts with a 1,2-diacyl-sn-glycero-3-phospho-(1D-myo-inositol-3-phosphate). Positions 515–541 (ESLLEIKKQRAMLETDVHELEKKLKVR) form a coiled coil.

The protein belongs to the protein-tyrosine phosphatase family. Non-receptor class myotubularin subfamily. Homodimer. Heterodimer with MTMR9.

It localises to the nucleus envelope. It carries out the reaction a 1,2-diacyl-sn-glycero-3-phospho-(1D-myo-inositol-3,5-bisphosphate) + H2O = a 1,2-diacyl-sn-glycero-3-phospho-(1D-myo-inositol-5-phosphate) + phosphate. It catalyses the reaction a 1,2-diacyl-sn-glycero-3-phospho-(1D-myo-inositol-3-phosphate) + H2O = a 1,2-diacyl-sn-glycero-3-phospho-(1D-myo-inositol) + phosphate. The catalysed reaction is 1,2-dioctanoyl-sn-glycero-3-phospho-(1D-myo-inositol-3,5-bisphosphate) + H2O = 1,2-dioctanoyl-sn-glycero-3-phospho-(1D-myo-inositol-5-phosphate) + phosphate. With respect to regulation, interaction with MTMR9 increases phosphatase activity. Its function is as follows. Lipid phosphatase that specifically dephosphorylates the D-3 position of phosphatidylinositol 3-phosphate and phosphatidylinositol 3,5-bisphosphate, generating phosphatidylinositol and phosphatidylinositol 5-phosphate. In complex with MTMR9, negatively regulates autophagy. The polypeptide is Phosphatidylinositol-3,5-bisphosphate 3-phosphatase MTMR8 (Homo sapiens (Human)).